The following is a 69-amino-acid chain: Toxin Tma2 (69 aa).

In terms of domain architecture, LCN-type CS-alpha/beta spans 2–66; that stretch reads KDDYPVDTAE…SPTKTSKRCN (65 aa). Disulfide bonds link cysteine 14–cysteine 65, cysteine 18–cysteine 41, cysteine 27–cysteine 48, and cysteine 31–cysteine 50.

The protein belongs to the long (4 C-C) scorpion toxin superfamily. Sodium channel inhibitor family. As to expression, expressed by the venom gland.

Its subcellular location is the secreted. Inhibits voltage-gated sodium channels (Nav). This toxin shows insect lethality against crickets. This chain is Toxin Tma2, found in Tityus macrochirus (Scorpion).